Reading from the N-terminus, the 1269-residue chain is MSNNSKSPPNEQHQQQPHPPDVLVQLTESFQHFFQSLSPQYQSMTSLPSINKDSYTSVGSAPTTNNNSNSNSNSNSSNRSLNNSGSSNSGGGGSNSNKKVNNNNNNNNNNNNNNLQSPTQSQFPYHYQYSSKALHDFEEKRKLLIEQLKSVKINLDTQCDDDPISFIKIRMELTKVKTSLETELKSLDELLHTTSEVEEPNPTPIDSITSLLTMIMPSSISNSVTNNTPSSATPLTLSNNNNYTSSSLATSPTTNSSSSSSSSSSSSSTHYYNSSISSNSLSSNLPPSSIPILNTSNNKNSYPNSIIPQGTPLDNPDPNLPRFPQRDHISVKLYVDCDDYFAASAQAIENATREVFITAWFLSPEVYLIRFPSLDERYRLDNLLKRKAMQGVKIFIILWDETKIATFKGSKRAKDKLEELHTNIKVIKHPPIIPIYWSHHQKTLIIDQEIAFVGGVDFCFGRFDTWCHHLIDVNSTLWKGKDYYNPILGDMGDILVPFEDSVDRKKIPRMPWHDVMAGVNGLAARDVALNFILRWNHHKDDYYPQLYFDTTPLSPVGTSQCQLLRSMDEWSGGGRIERSIHTAYVQAIEDANHYIYIENQNFVSTHAPNVWNQISFEIVKRIKRAIRKKEVFRVFIVIPCQQDGKVEETQIKGLMHWQYSTIIRGENTIMKLLRRDCPDVDLTEYICFLSLRTHAFLEGTFVTEQIYVHSKLMIVDDRTIIVGSANINDRSLIGERDSELAFIIRDEIDTIQTKMNGQDYIASRLVFNFRLRLWKEHLGLLPQINYPPHDQINNDINNIVNLNNNNNSNINNNINNNNNEINNNNNNNNNNNSNEINNNNSDGILNNSNSFHHGSVSDNLPPLNPSSNLNSSNKKLPTTTTAAAAATTTTTTTTTTTTTNGTGTTNKQKTSHHRSNSFQGLVLQSPGSNRSNLSSPQDSPQDSPRLKNLAEEISPPPTEQHQHQSPITDINLILENVDTIIHSNEQLPPPPSSTTPPPPPPPLTTTDSVIIEDYKSDGGNLNIENNNSNNTILTNAATSMNNSTSSLSSTSLPTTTTTTTAQQQQQQQQQQQQQQQQQQQQQQQQQQQQQQQQQQQPSQQQQQQQQQLSQQQQLQIKKKRSSISPSTSSNKLLLSGNGSGDSIRVVTDSGSSPRGQPRSMSSLHDHADSSYCQKSNIDLIDPTCSDFYFGVWIATAASNTRIYDTVFPAIPKNSIKTCEQFAQLQKIPVSLADSKLLSEVRGNLVFHPLDFLEGEDLQPSFLFTDDLFQ.

A compositionally biased stretch (polar residues) spans 55–64 (YTSVGSAPTT). Residues 55-121 (YTSVGSAPTT…NNNLQSPTQS (67 aa)) are disordered. Low complexity-rich tracts occupy residues 65–87 (NNNSNSNSNSNSSNRSLNNSGSS) and 95–114 (NSNKKVNNNNNNNNNNNNNN). Residues 131-192 (SKALHDFEEK…ELKSLDELLH (62 aa)) adopt a coiled-coil conformation. Polar residues predominate over residues 222–232 (NSVTNNTPSSA). 2 disordered regions span residues 222–269 (NSVT…SSST) and 300–320 (NSYPNSIIPQGTPLDNPDPNL). Residues 233 to 269 (TPLTLSNNNNYTSSSLATSPTTNSSSSSSSSSSSSST) are compositionally biased toward low complexity. PLD phosphodiesterase domains lie at 435-462 (IYWSHHQKTLIIDQEIAFVGGVDFCFGR) and 704-731 (EQIYVHSKLMIVDDRTIIVGSANINDRS). Residues His440, Lys442, Asp447, His709, Lys711, and Asp716 contribute to the active site. Positions 803-835 (NNNNNSNINNNINNNNNEINNNNNNNNNNNSNE) form a coiled coil. Composition is skewed to low complexity over residues 810-850 (INNN…NSNS), 859-906 (NLPP…GTTN), and 934-943 (SSPQDSPQDS). 2 disordered regions span residues 810–966 (INNN…HQSP) and 983–1007 (SNEQLPPPPSSTTPPPPPPPLTTTD). Positions 987-1003 (LPPPPSSTTPPPPPPPL) are enriched in pro residues. Residues 1059–1096 (TTAQQQQQQQQQQQQQQQQQQQQQQQQQQQQQQQQQQQ) adopt a coiled-coil conformation. Residues 1116–1167 (IKKKRSSISPSTSSNKLLLSGNGSGDSIRVVTDSGSSPRGQPRSMSSLHDHA) form a disordered region. Residues 1122–1142 (SISPSTSSNKLLLSGNGSGDS) show a composition bias toward low complexity. The segment covering 1148–1162 (DSGSSPRGQPRSMSS) has biased composition (polar residues).

The protein belongs to the phospholipase D family.

The enzyme catalyses a 1,2-diacyl-sn-glycero-3-phosphocholine + H2O = a 1,2-diacyl-sn-glycero-3-phosphate + choline + H(+). With respect to regulation, inhibited by butan-1-ol. Its function is as follows. Plays a role in cell growth. Hydrolyzes membrane phospholipids, such as PtdCho free headgroup and PtdOH (phosphatidic acid; signaling molecule on its own). Involved in the inhibition of actin-based motility and endocytosis. Its inhibition causes complete collapse of F-actin organization. In Dictyostelium discoideum (Social amoeba), this protein is Phospholipase D A (pldA).